The sequence spans 489 residues: Cytochrome P450 302a1, mitochondrial (489 aa).

C434 contacts heme.

The protein belongs to the cytochrome P450 family. It depends on heme as a cofactor. Complex coexpression pattern of dib (disembodied) and sad (shade) in the early embryo that restricts to the prothoracic gland cells of the developing ring gland during late embryogenesis. In larvae and adult, coexpression is seen in prothoracic gland and follicle cells of the ovary. In adults, coexpression is seen in the follicle cells.

It localises to the mitochondrion membrane. It catalyses the reaction 2,22-dideoxyecdysone + 2 reduced [adrenodoxin] + O2 + 2 H(+) = 2-deoxyecdysone + 2 oxidized [adrenodoxin] + H2O. It functions in the pathway steroid biosynthesis; ecdysteroid biosynthesis. Functionally, required for CNS development; negatively regulates glial cell division in the embryonic midline. Involved in the metabolism of insect hormones; responsible for ecdysteroid C22-hydroxylase activity. May be involved in the breakdown of synthetic insecticides. The sequence is that of Cytochrome P450 302a1, mitochondrial from Drosophila melanogaster (Fruit fly).